A 402-amino-acid polypeptide reads, in one-letter code: Triose phosphate/phosphate translocator, non-green plastid, chloroplastic (402 aa).

The transit peptide at Met1–Ala82 directs the protein to the chloroplast. The Chloroplast intermembrane segment spans residues Ala83 to Lys98. The chain crosses the membrane as a helical span at residues Val99–Tyr119. Positions Ile118–Val236 constitute an EamA domain. Residues Asn120–Met131 are Lumenal-facing. The helical transmembrane segment at Thr132–Asn152 threads the bilayer. Residues Leu153–Ala209 are Chloroplast intermembrane-facing. The chain crosses the membrane as a helical span at residues Met210–Gly230. Residues Val231–Thr278 lie on the Lumenal side of the membrane. The chain crosses the membrane as a helical span at residues Leu279 to Ser298. Residues Glu299–Val374 lie on the Chloroplast intermembrane side of the membrane. The chain crosses the membrane as a helical span at residues Asn375–Arg394. Topologically, residues Ile395–Ala402 are lumenal.

Belongs to the TPT transporter family. TPT (TC 2.A.7.9) subfamily. As to quaternary structure, homodimer.

The protein localises to the plastid. Its subcellular location is the chloroplast membrane. Mediates the export of fixed carbons from the chloroplasts into the cytosol in the form of triose phosphates. The sequence is that of Triose phosphate/phosphate translocator, non-green plastid, chloroplastic (NGTPT) from Brassica oleracea var. botrytis (Cauliflower).